We begin with the raw amino-acid sequence, 716 residues long: Protein Hook homolog 2 (716 aa).

The tract at residues 1–161 is required for localization to the centrosome and induction of aggresome formation; the sequence is MSVDKAELCG…ELMTKDTPDS (161 aa). The segment at 1–546 is sufficient for interaction with microtubules; that stretch reads MSVDKAELCG…LKRKLEDHLQ (546 aa). Residues 6–122 form the Calponin-homology (CH) domain; the sequence is AELCGSLLTW…KLLQLVLGCA (117 aa). Position 163 is a phosphoserine (Ser163). Coiled coils occupy residues 188–427 and 455–605; these read DHLQ…AQLQ and AELR…VDKA. Residues 533–716 are required for localization to the centrosome and induction of aggresome formation; the sequence is DPTLLKRKLE…ALSLRPTDKH (184 aa). The tract at residues 582–716 is sufficient for interaction with CNTRL; it reads DSLQKKDADL…ALSLRPTDKH (135 aa).

This sequence belongs to the hook family. In terms of assembly, self-associates. Component of the FTS/Hook/FHIP complex (FHF complex), composed of AKTIP/FTS, FHIP1B, and one or more members of the Hook family of proteins HOOK1, HOOK2, and HOOK3. May interact directly with AKTIP/FTS, HOOK1 and HOOK3. Associates with several subunits of the homotypic vesicular sorting complex (the HOPS complex) including VPS16 and VPS41; these interactions may be indirect. Interacts with CNTRL. Interacts with microtubules. Interacts with ZC3H14. Interacts with LRGUK (via guanylate kinase-like domain). Interacts with CCDC181. Interacts with AP4M1; the interaction is direct, mediates the interaction between FTS-Hook-FHIP (FHF) complex and AP-4 and the perinuclear distribution of AP-4. Expressed in brain, cerebellum, kidney, liver and heart, with highest levels in heart and kidney (at protein level).

It localises to the cytoplasm. It is found in the cytoskeleton. Its subcellular location is the microtubule organizing center. The protein localises to the centrosome. The protein resides in the golgi apparatus. It localises to the trans-Golgi network. Component of the FTS/Hook/FHIP complex (FHF complex). The FHF complex may function to promote vesicle trafficking and/or fusion via the homotypic vesicular protein sorting complex (the HOPS complex). Contributes to the establishment and maintenance of centrosome function. May function in the positioning or formation of aggresomes, which are pericentriolar accumulations of misfolded proteins, proteasomes and chaperones. FHF complex promotes the distribution of AP-4 complex to the perinuclear area of the cell. This is Protein Hook homolog 2 (Hook2) from Mus musculus (Mouse).